The sequence spans 714 residues: Neutral ceramidase A (714 aa).

A signal peptide spans 1–23; that stretch reads MKRSIVFIYSLVILLLSVGFIDA. N-linked (GlcNAc...) asparagine glycans are attached at residues N218 and N246. Residue S293 is the Nucleophile of the active site. N353, N373, N416, N571, N610, and N700 each carry an N-linked (GlcNAc...) asparagine glycan.

This sequence belongs to the neutral ceramidase family.

It is found in the secreted. The catalysed reaction is an N-acylsphing-4-enine + H2O = sphing-4-enine + a fatty acid. Its function is as follows. Hydrolyzes the sphingolipid ceramide into sphingosine and free fatty acid at an optimal pH of 3.0. Has no activity toward glycosphingolipids, such as GalCer and Galbeta1-3GalNAcbeta1-4(NeuAcalpha2-3)Galbeta1-4Glcbeta1-1'Cer or sphingomyelin. The sequence is that of Neutral ceramidase A (dcd2A) from Dictyostelium discoideum (Social amoeba).